We begin with the raw amino-acid sequence, 1793 residues long: Transposon Ty1-H Gag-Pol polyprotein (1793 aa).

3 stretches are compositionally biased toward polar residues: residues 1–10 (MESQQLSNYP), 48–60 (TKANSQQTTTPAS), and 127–152 (QSQFPQYPSSVGTPLSTPSPESGNTF). Disordered regions lie at residues 1 to 84 (MESQ…QNGP), 126 to 174 (PQSQ…PPPM), and 390 to 459 (GSRN…SKST). The segment covering 153–165 (TDSSSADSDMTST) has biased composition (low complexity). The interval 337-439 (NNGIHINNKV…NSKSKTARAH (103 aa)) is RNA-binding. A compositionally biased stretch (low complexity) spans 440–456 (NVSTSNNSPSTDNDSIS). Aspartate 499 (for protease activity; shared with dimeric partner) is an active-site residue. The interval 621–678 (NVHTSESTRKYPYPFIHRMLAHANAQTIRYSLKNNTITYFNESDVDWSSAIDYQCPDC) is integrase-type zinc finger-like. The Integrase catalytic domain occupies 698–873 (NSYEPFQYLH…AGLDISTLLP (176 aa)). Mg(2+) contacts are provided by aspartate 709 and aspartate 774. The segment at 996 to 1208 (AVSPTDSTPP…SSLGGIGDSN (213 aa)) is disordered. Over residues 998–1007 (SPTDSTPPST) the composition is skewed to low complexity. Residues 1043-1053 (STPQISDIEST) are compositionally biased toward polar residues. The segment covering 1076 to 1091 (ESSHASKSKDFRHSDS) has biased composition (basic and acidic residues). 2 stretches are compositionally biased toward polar residues: residues 1092–1120 (YSDNETNHTNVPISSTGGTNNKTVPQTSE) and 1133–1144 (SIDTSSSESNSL). Residues 1216–1250 (KKRSLEDNETEIKVSRDTWNTKNMRSLEPPRSKKR) carry the Bipartite nuclear localization signal motif. The 139-residue stretch at 1376–1514 (NNYYITQLDI…DILGLEIKYQ (139 aa)) folds into the Reverse transcriptase Ty1/copia-type domain. Residues aspartate 1384, aspartate 1465, aspartate 1466, aspartate 1648, glutamate 1690, and aspartate 1723 each coordinate Mg(2+). An RNase H Ty1/copia-type domain is found at 1648–1790 (DASYGNQPYY…IKTFKLLTNK (143 aa)).

In terms of assembly, the capsid protein forms a homotrimer, from which the VLPs are assembled. The protease is a homodimer, whose active site consists of two apposed aspartic acid residues. Post-translationally, initially, virus-like particles (VLPs) are composed of the structural unprocessed proteins Gag and Gag-Pol, and also contain the host initiator methionine tRNA (tRNA(i)-Met) which serves as a primer for minus-strand DNA synthesis, and a dimer of genomic Ty RNA. Processing of the polyproteins occurs within the particle and proceeds by an ordered pathway, called maturation. First, the protease (PR) is released by autocatalytic cleavage of the Gag-Pol polyprotein yielding capsid protein p45 and a Pol-p154 precursor protein. This cleavage is a prerequisite for subsequent processing of Pol-p154 at the remaining sites to release the mature structural and catalytic proteins. Maturation takes place prior to the RT reaction and is required to produce transposition-competent VLPs.

The protein resides in the cytoplasm. It localises to the nucleus. The enzyme catalyses DNA(n) + a 2'-deoxyribonucleoside 5'-triphosphate = DNA(n+1) + diphosphate. It catalyses the reaction Endonucleolytic cleavage to 5'-phosphomonoester.. Its function is as follows. Capsid protein (CA) is the structural component of the virus-like particle (VLP), forming the shell that encapsulates the retrotransposons dimeric RNA genome. The particles are assembled from trimer-clustered units and there are holes in the capsid shells that allow for the diffusion of macromolecules. CA also has nucleocapsid-like chaperone activity, promoting primer tRNA(i)-Met annealing to the multipartite primer-binding site (PBS), dimerization of Ty1 RNA and initiation of reverse transcription. Functionally, the aspartyl protease (PR) mediates the proteolytic cleavages of the Gag and Gag-Pol polyproteins after assembly of the VLP. In terms of biological role, reverse transcriptase/ribonuclease H (RT) is a multifunctional enzyme that catalyzes the conversion of the retro-elements RNA genome into dsDNA within the VLP. The enzyme displays a DNA polymerase activity that can copy either DNA or RNA templates, and a ribonuclease H (RNase H) activity that cleaves the RNA strand of RNA-DNA heteroduplexes during plus-strand synthesis and hydrolyzes RNA primers. The conversion leads to a linear dsDNA copy of the retrotransposon that includes long terminal repeats (LTRs) at both ends. Integrase (IN) targets the VLP to the nucleus, where a subparticle preintegration complex (PIC) containing at least integrase and the newly synthesized dsDNA copy of the retrotransposon must transit the nuclear membrane. Once in the nucleus, integrase performs the integration of the dsDNA into the host genome. In Saccharomyces cerevisiae (strain ATCC 204508 / S288c) (Baker's yeast), this protein is Transposon Ty1-H Gag-Pol polyprotein (TY1B-H).